We begin with the raw amino-acid sequence, 448 residues long: tRNA modification GTPase MnmE (448 aa).

Residues arginine 25, glutamate 83, and lysine 122 each coordinate (6S)-5-formyl-5,6,7,8-tetrahydrofolate. The 155-residue stretch at 218–372 (GFKVAIIGKP…LTQKLQKLLD (155 aa)) folds into the TrmE-type G domain. Asparagine 228 contributes to the K(+) binding site. GTP is bound by residues 228-233 (NTGKSS), 247-253 (SDIAGTT), and 272-275 (DTAG). Residue serine 232 coordinates Mg(2+). K(+) is bound by residues serine 247, isoleucine 249, and threonine 252. Threonine 253 contacts Mg(2+). Lysine 448 serves as a coordination point for (6S)-5-formyl-5,6,7,8-tetrahydrofolate.

Belongs to the TRAFAC class TrmE-Era-EngA-EngB-Septin-like GTPase superfamily. TrmE GTPase family. As to quaternary structure, homodimer. Heterotetramer of two MnmE and two MnmG subunits. The cofactor is K(+).

Its subcellular location is the cytoplasm. Its function is as follows. Exhibits a very high intrinsic GTPase hydrolysis rate. Involved in the addition of a carboxymethylaminomethyl (cmnm) group at the wobble position (U34) of certain tRNAs, forming tRNA-cmnm(5)s(2)U34. In Nitratiruptor sp. (strain SB155-2), this protein is tRNA modification GTPase MnmE.